Consider the following 557-residue polypeptide: Dihydroxy-acid dehydratase (557 aa).

Residue Asp78 participates in Mg(2+) binding. Cys119 provides a ligand contact to [2Fe-2S] cluster. Residues Asp120 and Lys121 each contribute to the Mg(2+) site. Lys121 carries the post-translational modification N6-carboxylysine. Cys192 contributes to the [2Fe-2S] cluster binding site. Residue Glu442 participates in Mg(2+) binding. The active-site Proton acceptor is Ser468.

The protein belongs to the IlvD/Edd family. Homodimer. Requires [2Fe-2S] cluster as cofactor. Mg(2+) is required as a cofactor.

It catalyses the reaction (2R)-2,3-dihydroxy-3-methylbutanoate = 3-methyl-2-oxobutanoate + H2O. The enzyme catalyses (2R,3R)-2,3-dihydroxy-3-methylpentanoate = (S)-3-methyl-2-oxopentanoate + H2O. Its pathway is amino-acid biosynthesis; L-isoleucine biosynthesis; L-isoleucine from 2-oxobutanoate: step 3/4. It functions in the pathway amino-acid biosynthesis; L-valine biosynthesis; L-valine from pyruvate: step 3/4. Functions in the biosynthesis of branched-chain amino acids. Catalyzes the dehydration of (2R,3R)-2,3-dihydroxy-3-methylpentanoate (2,3-dihydroxy-3-methylvalerate) into 2-oxo-3-methylpentanoate (2-oxo-3-methylvalerate) and of (2R)-2,3-dihydroxy-3-methylbutanoate (2,3-dihydroxyisovalerate) into 2-oxo-3-methylbutanoate (2-oxoisovalerate), the penultimate precursor to L-isoleucine and L-valine, respectively. In Bacillus cereus (strain AH820), this protein is Dihydroxy-acid dehydratase.